Consider the following 799-residue polypeptide: Protein ADP-ribosyltransferase PARP3 (799 aa).

Over residues 1-49 the composition is skewed to basic and acidic residues; that stretch reads MKVESRSHNVHHAHGEEEKVMTRKQKAESKAHEVEHSPKKAKVEDEKNG. The segment at 1-55 is disordered; sequence MKVESRSHNVHHAHGEEEKVMTRKQKAESKAHEVEHSPKKAKVEDEKNGHTNGKS. A PADR1 zinc-binding domain is found at 39–188; it reads KKAKVEDEKN…QRDLGLAIKP (150 aa). One can recognise an SAP domain in the interval 71–105; the sequence is NEQLSLEQMKEILEANDLDSSGSDLEITRRCQDLL. Residues 108–152 are zinc ribbon; sequence GALEKCMVCNGNMEFDGRRYGCRGFYSEWSSCTFSTREPPRKDEP. Zn(2+)-binding residues include Cys-113, Cys-116, Cys-129, and Cys-139. The disordered stretch occupies residues 140-161; sequence TFSTREPPRKDEPIKLPDSVQN. Residues 145-154 show a composition bias toward basic and acidic residues; it reads EPPRKDEPIK. The BRCT domain occupies 189 to 261; the sequence is FTGMMISLMG…EPQPLESYDL (73 aa). The region spanning 309–409 is the WGR domain; that stretch reads DGKIFEKDGI…KKFQKKPLKF (101 aa). The PARP alpha-helical domain maps to 436–555; that stretch reads HCKLEPMVAN…DITLASHLIG (120 aa). The 232-residue stretch at 564-795 folds into the PARP catalytic domain; it reads DPLSDTYKKL…VKYEEKDAVI (232 aa).

This sequence belongs to the ARTD/PARP family.

Its subcellular location is the nucleus. The enzyme catalyses L-aspartyl-[protein] + NAD(+) = 4-O-(ADP-D-ribosyl)-L-aspartyl-[protein] + nicotinamide. The catalysed reaction is L-glutamyl-[protein] + NAD(+) = 5-O-(ADP-D-ribosyl)-L-glutamyl-[protein] + nicotinamide. Functionally, involved in the base excision repair (BER) pathway, by catalyzing the poly(ADP-ribosyl)ation of a limited number of acceptor proteins involved in chromatin architecture and in DNA metabolism. This modification follows DNA damages and appears as an obligatory step in a detection/signaling pathway leading to the reparation of DNA strand breaks. This is Protein ADP-ribosyltransferase PARP3 (PARP3) from Medicago truncatula (Barrel medic).